The following is a 364-amino-acid chain: DNA polymerase IV (364 aa).

The UmuC domain maps to 6-194 (VFHIDFDYFY…LKIRDIPGIG (189 aa)). Mg(2+)-binding residues include D10 and D111. E112 is a catalytic residue.

This sequence belongs to the DNA polymerase type-Y family. In terms of assembly, monomer. It depends on Mg(2+) as a cofactor.

The protein localises to the cytoplasm. The catalysed reaction is DNA(n) + a 2'-deoxyribonucleoside 5'-triphosphate = DNA(n+1) + diphosphate. Poorly processive, error-prone DNA polymerase involved in untargeted mutagenesis. Copies undamaged DNA at stalled replication forks, which arise in vivo from mismatched or misaligned primer ends. These misaligned primers can be extended by PolIV. Exhibits no 3'-5' exonuclease (proofreading) activity. May be involved in translesional synthesis. This is DNA polymerase IV from Nitrosopumilus maritimus (strain SCM1).